The sequence spans 185 residues: ATP-dependent protease subunit HslV (185 aa).

Residue Thr12 is part of the active site. Na(+) contacts are provided by Ala168, Cys171, and Thr174.

It belongs to the peptidase T1B family. HslV subfamily. A double ring-shaped homohexamer of HslV is capped on each side by a ring-shaped HslU homohexamer. The assembly of the HslU/HslV complex is dependent on binding of ATP.

Its subcellular location is the cytoplasm. It carries out the reaction ATP-dependent cleavage of peptide bonds with broad specificity.. Its activity is regulated as follows. Allosterically activated by HslU binding. In terms of biological role, protease subunit of a proteasome-like degradation complex believed to be a general protein degrading machinery. This chain is ATP-dependent protease subunit HslV, found in Dinoroseobacter shibae (strain DSM 16493 / NCIMB 14021 / DFL 12).